We begin with the raw amino-acid sequence, 300 residues long: GTPase Era (300 aa).

The region spanning 7–182 (YCGFIAIVGR…LRKGVHHFPE (176 aa)) is the Era-type G domain. Positions 15 to 22 (GRPNVGKS) are G1. GTP is bound at residue 15–22 (GRPNVGKS). The tract at residues 41-45 (QTTRH) is G2. The interval 62–65 (DTPG) is G3. GTP contacts are provided by residues 62–66 (DTPGL) and 124–127 (NKVD). Residues 124–127 (NKVD) form a G4 region. Positions 154-156 (ISA) are G5. Positions 206–283 (TGEELPYSVT…HLELWVKVKS (78 aa)) constitute a KH type-2 domain.

Belongs to the TRAFAC class TrmE-Era-EngA-EngB-Septin-like GTPase superfamily. Era GTPase family. In terms of assembly, monomer.

Its subcellular location is the cytoplasm. The protein resides in the cell inner membrane. In terms of biological role, an essential GTPase that binds both GDP and GTP, with rapid nucleotide exchange. Plays a role in 16S rRNA processing and 30S ribosomal subunit biogenesis and possibly also in cell cycle regulation and energy metabolism. This Histophilus somni (strain 129Pt) (Haemophilus somnus) protein is GTPase Era.